A 720-amino-acid polypeptide reads, in one-letter code: Probable ATP-dependent RNA helicase DHX35 (720 aa).

The Helicase ATP-binding domain maps to leucine 64–alanine 229. Glycine 77 to serine 84 lines the ATP pocket. Positions aspartate 176–histidine 179 match the DEAH box motif. The Helicase C-terminal domain occupies threonine 261–glycine 438.

It belongs to the DEAD box helicase family. DEAH subfamily. In terms of assembly, identified in the spliceosome C complex.

The catalysed reaction is ATP + H2O = ADP + phosphate + H(+). Its function is as follows. May be involved in pre-mRNA splicing. This Pongo abelii (Sumatran orangutan) protein is Probable ATP-dependent RNA helicase DHX35 (DHX35).